The sequence spans 506 residues: Glucosidase 2 subunit beta (506 aa).

The N-terminal stretch at 1–23 (MKFSQWYTLTAPLLISSLYTVNA) is a signal peptide. Cys86 and Cys108 are disulfide-bonded. Coiled-coil stretches lie at residues 172 to 243 (SLVA…LYET) and 338 to 374 (ESYR…LEYH). In terms of domain architecture, MRH spans 279-474 (ESCNNHLSML…KMKSPAACSP (196 aa)). 2 cysteine pairs are disulfide-bonded: Cys431–Cys460 and Cys445–Cys472. The ER retrieval sequence signature appears at 503-506 (VDEL).

In terms of assembly, heterodimer of a catalytic subunit alpha (gls2) and a subunit beta (gtb1).

Its subcellular location is the endoplasmic reticulum. In terms of biological role, subunit of glucosidase 2, which cleaves sequentially the 2 innermost alpha-1,3-linked glucose residues from the Glc(2)Man(9)GlcNAc(2) oligosaccharide precursor of immature glycoproteins in the endoplasmic reticulum (ER). Specifically required for the cleavage of the final glucose. The subunit beta retains the catalytic subunit alpha in the ER. The chain is Glucosidase 2 subunit beta (gtb1) from Schizosaccharomyces pombe (strain 972 / ATCC 24843) (Fission yeast).